A 303-amino-acid polypeptide reads, in one-letter code: Putative deoxyribose-phosphate aldolase (303 aa).

The active-site Proton donor/acceptor is the Asp-157. Residue Lys-220 is the Schiff-base intermediate with acetaldehyde of the active site. Catalysis depends on Lys-256, which acts as the Proton donor/acceptor.

The protein belongs to the DeoC/FbaB aldolase family. DeoC type 2 subfamily.

The enzyme catalyses 2-deoxy-D-ribose 5-phosphate = D-glyceraldehyde 3-phosphate + acetaldehyde. It functions in the pathway carbohydrate degradation; 2-deoxy-D-ribose 1-phosphate degradation; D-glyceraldehyde 3-phosphate and acetaldehyde from 2-deoxy-alpha-D-ribose 1-phosphate: step 2/2. Catalyzes a reversible aldol reaction between acetaldehyde and D-glyceraldehyde 3-phosphate to generate 2-deoxy-D-ribose 5-phosphate. The polypeptide is Putative deoxyribose-phosphate aldolase (Caenorhabditis elegans).